Here is a 314-residue protein sequence, read N- to C-terminus: Coiled-coil domain-containing protein 69 (314 aa).

Residues 1–12 (MGCHNSKVCGQV) show a composition bias toward low complexity. Disordered stretches follow at residues 1-43 (MGCH…HSSE) and 114-133 (RSVS…LHSE). The N-myristoyl glycine moiety is linked to residue Gly2. 2 stretches are compositionally biased toward basic and acidic residues: residues 20–43 (KAQE…HSSE) and 120–133 (HQSE…LHSE). The stretch at 106–291 (NDLHEQQMRS…QEKEELLFKL (186 aa)) forms a coiled coil.

It belongs to the CCDC69 family.

The protein localises to the cytoplasm. Its subcellular location is the cytoskeleton. It is found in the spindle. It localises to the midbody. Functionally, may act as a scaffold to regulate the recruitment and assembly of spindle midzone components. The sequence is that of Coiled-coil domain-containing protein 69 (ccdc69) from Danio rerio (Zebrafish).